The following is a 118-amino-acid chain: Holo-[acyl-carrier-protein] synthase (118 aa).

Positions 9 and 52 each coordinate Mg(2+).

The protein belongs to the P-Pant transferase superfamily. AcpS family. The cofactor is Mg(2+).

Its subcellular location is the cytoplasm. It catalyses the reaction apo-[ACP] + CoA = holo-[ACP] + adenosine 3',5'-bisphosphate + H(+). Its function is as follows. Transfers the 4'-phosphopantetheine moiety from coenzyme A to a Ser of acyl-carrier-protein. This Frankia casuarinae (strain DSM 45818 / CECT 9043 / HFP020203 / CcI3) protein is Holo-[acyl-carrier-protein] synthase.